The sequence spans 148 residues: Lysozyme C-3 (148 aa).

The N-terminal stretch at 1 to 18 is a signal peptide; it reads MKTLLVLALLLLSVSVQA. One can recognise a C-type lysozyme domain in the interval 19-148; that stretch reads KVYDRCEFAR…VSQYIRGCKL (130 aa). Disulfide bonds link Cys-24–Cys-146, Cys-48–Cys-134, Cys-83–Cys-99, and Cys-95–Cys-113. Residues Glu-53 and Asp-71 contribute to the active site.

It belongs to the glycosyl hydrolase 22 family. Monomer.

It localises to the secreted. The enzyme catalyses Hydrolysis of (1-&gt;4)-beta-linkages between N-acetylmuramic acid and N-acetyl-D-glucosamine residues in a peptidoglycan and between N-acetyl-D-glucosamine residues in chitodextrins.. In terms of biological role, lysozymes have primarily a bacteriolytic function; those in tissues and body fluids are associated with the monocyte-macrophage system and enhance the activity of immunoagents. In Sus scrofa (Pig), this protein is Lysozyme C-3.